The sequence spans 107 residues: Large ribosomal subunit protein mL55 (107 aa).

The transit peptide at 1–16 (MLLKQLPQAVQQIRCI) directs the protein to the mitochondrion.

It belongs to the mitochondrion-specific ribosomal protein mL55 family. Component of the mitochondrial ribosome large subunit (39S) which comprises a 16S rRNA and about 50 distinct proteins. As to expression, ubiquitously expressed (at protein level).

It localises to the mitochondrion. Its function is as follows. Involved in mitochondrial biogenesis and G2/M phase cell cycle progression. The polypeptide is Large ribosomal subunit protein mL55 (mRpL55) (Drosophila melanogaster (Fruit fly)).